A 195-amino-acid chain; its full sequence is MRTAVFGGSFDPPHNGHLALSLFARELAGLDRLIVSVSKNPFKAAADASDDDRSAMARLLVAEINVAGVFAEISGWELQQSGPSYTIDLLRHVEERCPGDELVLLVGEDSYLQMPQWKFASEILKHCTIAVFGRSDIDAADAPPSDPLLPAIHYDFDMPVSATKIRRLAAAGQPIGQFVPSSIAQYIAEHKLYSA.

It belongs to the NadD family.

It catalyses the reaction nicotinate beta-D-ribonucleotide + ATP + H(+) = deamido-NAD(+) + diphosphate. It functions in the pathway cofactor biosynthesis; NAD(+) biosynthesis; deamido-NAD(+) from nicotinate D-ribonucleotide: step 1/1. In terms of biological role, catalyzes the reversible adenylation of nicotinate mononucleotide (NaMN) to nicotinic acid adenine dinucleotide (NaAD). This Chlorobaculum tepidum (strain ATCC 49652 / DSM 12025 / NBRC 103806 / TLS) (Chlorobium tepidum) protein is Probable nicotinate-nucleotide adenylyltransferase.